Reading from the N-terminus, the 276-residue chain is Probable endonuclease 4 (276 aa).

The Zn(2+) site is built by H70, H108, E143, D176, H179, H210, D223, H225, and E255.

The protein belongs to the AP endonuclease 2 family. It depends on Zn(2+) as a cofactor.

It carries out the reaction Endonucleolytic cleavage to 5'-phosphooligonucleotide end-products.. In terms of biological role, endonuclease IV plays a role in DNA repair. It cleaves phosphodiester bonds at apurinic or apyrimidinic (AP) sites, generating a 3'-hydroxyl group and a 5'-terminal sugar phosphate. The polypeptide is Probable endonuclease 4 (Mesomycoplasma hyopneumoniae (strain J / ATCC 25934 / NCTC 10110) (Mycoplasma hyopneumoniae)).